The sequence spans 427 residues: MAIYAVVGTQWGDEGKGKIIDFLSSKIDYVVRFNGGNNAGHTIVVNDKKFIFNLLPSGVLQGAKCILGPSVVIDPLILIQELEVLKNNNIKTEIFISDKAHIIMPYHIKFDELSEQKKGIHKIGTTKKGIGPCYADKINRIGIRTIDLLNTEIFANKLKTNLEEKNQIIEKIYNDKPLDYDDILNTYKKYIEILKSLITNTEKILHHAINSEKYILIEGAQGTMLDIEHGTFPFVTSSNTLITAAAGCGIPISKIKQKIGIIKAFSSRVGSGPFVTEISNSIGDIIREKGQEYGSTTKRPRRIGWLDLLTIKKAIALNELNHLALTKLDILNNIESLKICIAYEFQGKIYDYIPTSCETIEKVKPIYKVFKGFKEDISNIKNYDDLPIEAREYIEFIEKEVGIQISILSVGSEREKTIFRNQEWSNI.

GTP is bound by residues 12–18 (GDEGKGK) and 40–42 (GHT). Asp-13 functions as the Proton acceptor in the catalytic mechanism. Residues Asp-13 and Gly-40 each coordinate Mg(2+). IMP-binding positions include 13–16 (DEGK), 38–41 (NAGH), Thr-126, Arg-140, Gln-221, Thr-236, and Arg-299. The active-site Proton donor is His-41. 295–301 (STTKRPR) lines the substrate pocket. GTP-binding positions include Arg-301, 327–329 (KLD), and 409–411 (SVG).

Belongs to the adenylosuccinate synthetase family. As to quaternary structure, homodimer. Mg(2+) serves as cofactor.

Its subcellular location is the cytoplasm. It carries out the reaction IMP + L-aspartate + GTP = N(6)-(1,2-dicarboxyethyl)-AMP + GDP + phosphate + 2 H(+). It participates in purine metabolism; AMP biosynthesis via de novo pathway; AMP from IMP: step 1/2. Its function is as follows. Plays an important role in the de novo pathway of purine nucleotide biosynthesis. Catalyzes the first committed step in the biosynthesis of AMP from IMP. This chain is Adenylosuccinate synthetase, found in Borrelia recurrentis (strain A1).